Reading from the N-terminus, the 324-residue chain is Glyceraldehyde-3-phosphate dehydrogenase 1 (324 aa).

NAD(+)-binding positions include 13-14 (RI), D35, and K85. Residues 157–159 (SCT), T188, 217–218 (TG), and R240 each bind D-glyceraldehyde 3-phosphate. C158 acts as the Nucleophile in catalysis. N322 serves as a coordination point for NAD(+).

The protein belongs to the glyceraldehyde-3-phosphate dehydrogenase family. Homotetramer.

Its subcellular location is the cytoplasm. The enzyme catalyses D-glyceraldehyde 3-phosphate + phosphate + NAD(+) = (2R)-3-phospho-glyceroyl phosphate + NADH + H(+). The protein operates within carbohydrate degradation; glycolysis; pyruvate from D-glyceraldehyde 3-phosphate: step 1/5. This chain is Glyceraldehyde-3-phosphate dehydrogenase 1 (GPD-1), found in Globodera rostochiensis (Golden nematode worm).